Reading from the N-terminus, the 377-residue chain is cAMP-dependent protein kinase type II regulatory subunit (377 aa).

Residues 48–69 (ERPSVSHTDQSTDDQLSVNSQD) show a composition bias toward polar residues. Positions 48–78 (ERPSVSHTDQSTDDQLSVNSQDADAEPPVMA) are disordered. Ser51, Ser58, Ser64, Ser67, and Ser84 each carry phosphoserine. The Pseudophosphorylation motif motif lies at 81 to 85 (RRKSV). Position 90 is a phosphotyrosine (Tyr90). Residues 124 to 239 (LFRS…LLNS), Glu189, Arg198, 242 to 362 (MLKA…YESQ), Glu311, and Arg320 each bind 3',5'-cyclic AMP.

It belongs to the cAMP-dependent kinase regulatory chain family. As to quaternary structure, tetramer, composed of 2 regulatory (R) and 2 catalytic (C) subunits. In the presence of cAMP it dissociates into 2 active monomeric C subunits and an R dimer. Interacts with Akap200. In terms of processing, the pseudophosphorylation site binds to the substrate-binding region of the catalytic chain but is not phosphorylated. The physiological significance of phosphorylations by other kinases is unclear. Detected in follicle cells, germline-derived cells, germline line stem cells and outer rim of ring canals of nurse cells throughout oogenesis (at protein level).

It is found in the cytoplasm. Its subcellular location is the cell membrane. Regulatory subunit of the cAMP-dependent protein kinases involved in cAMP signaling in cells. Mediates membrane association by binding to anchoring proteins, such as Akap200. Might play an essential role in the regulation of neuronal activity in the brain. This Drosophila melanogaster (Fruit fly) protein is cAMP-dependent protein kinase type II regulatory subunit (Pka-R2).